The sequence spans 263 residues: Oxidoreductase UcpA (263 aa).

10–32 (LITGALQGIGEGIARTFARHGAN) lines the NAD(+) pocket. Position 141 (Ser141) interacts with substrate. The active-site Proton acceptor is the Tyr155.

This sequence belongs to the short-chain dehydrogenases/reductases (SDR) family.

This Escherichia coli O157:H7 protein is Oxidoreductase UcpA (ucpA).